A 231-amino-acid polypeptide reads, in one-letter code: Uracil-DNA glycosylase (231 aa).

D74 functions as the Proton acceptor in the catalytic mechanism.

The protein belongs to the uracil-DNA glycosylase (UDG) superfamily. UNG family.

It is found in the cytoplasm. It catalyses the reaction Hydrolyzes single-stranded DNA or mismatched double-stranded DNA and polynucleotides, releasing free uracil.. In terms of biological role, excises uracil residues from the DNA which can arise as a result of misincorporation of dUMP residues by DNA polymerase or due to deamination of cytosine. The sequence is that of Uracil-DNA glycosylase from Campylobacter jejuni subsp. doylei (strain ATCC BAA-1458 / RM4099 / 269.97).